The chain runs to 330 residues: MQEQKDMFDLTIIGGGPAGLFAAFYAGMRKMKVKVIESMPQLGGQLSALYPDKYIYDVAGFPKVKAQDLVDQLTAQAQQFQPEIVLEEAVQTLEKQEDETFVLTTDANIHYTKAVLITAGAGAFAPRKLQVEKADFYEDKNIHYFIRDLSAFTGKRVVVIGGGDSAVDWALMLEPIAKEVTLVHRRDAFRAHEHSVDLLKKSSVRILTPYETAELHGDENGVTAVTFSEVKGDQTETIAVDDVIVNFGFVSTLGPIKEWGLEIRKNAIPVNTKMETNIPGVYAAGDVSTYDGKIKLIATGFGEAPTAVNNAKVYIDPTARAFPGHSTSLF.

Residues glutamate 37, glutamine 45, tyrosine 50, valine 90, phenylalanine 124, aspartate 286, and threonine 327 each contribute to the FAD site.

Belongs to the ferredoxin--NADP reductase type 2 family. In terms of assembly, homodimer. FAD serves as cofactor.

The catalysed reaction is 2 reduced [2Fe-2S]-[ferredoxin] + NADP(+) + H(+) = 2 oxidized [2Fe-2S]-[ferredoxin] + NADPH. The chain is Ferredoxin--NADP reductase 2 from Shouchella clausii (strain KSM-K16) (Alkalihalobacillus clausii).